Consider the following 369-residue polypeptide: MLNFKHLMAAALLLSTSLGVQAERLKDIASISGVRSNQLIGYGLVVGLNGTGDQTTQTPFTLQTFNNMLSQFGIKVPAGSGNVQLKNVAAVSVSADLPAFAKPGQQVDITVSSIGNSKSLRGGTLLLTPLKGIDGNVYAIAQGNLVVGGFDAEGRDGSKITVNVPSAGRIPGGASVERAVPSGFNQGNSLTLNLNRSDFTTAKRIVDKINDMLGPGVAQAIDGGSIRVTAPLDPSQRVDYLSILENLEIDPGQAVAKVIINSRTGTIVIGQNVKVSPAAVTHGSLTVTITEDPIVSQPGPLSNGQTAVVPRSRVNAQQEAKPMFKFGPGTTLDEIVRAVNQVGAAPGDLMAILEALKQAGALQADLIVI.

An N-terminal signal peptide occupies residues 1 to 22 (MLNFKHLMAAALLLSTSLGVQA).

Belongs to the FlgI family. In terms of assembly, the basal body constitutes a major portion of the flagellar organelle and consists of four rings (L,P,S, and M) mounted on a central rod.

The protein resides in the periplasm. It localises to the bacterial flagellum basal body. Functionally, assembles around the rod to form the L-ring and probably protects the motor/basal body from shearing forces during rotation. This chain is Flagellar P-ring protein, found in Pseudomonas fluorescens (strain ATCC BAA-477 / NRRL B-23932 / Pf-5).